A 523-amino-acid chain; its full sequence is Tyrosine-protein kinase transforming protein Src (523 aa).

Residues 1 to 50 (MGSSKSKPKDPSQRRRSLEPPDSTHHGGFPASQTPNKTAAPDTHRTPSRS) form a disordered region. Glycine 2 carries N-myristoyl glycine; by host lipidation. Over residues 7-25 (KPKDPSQRRRSLEPPDSTH) the composition is skewed to basic and acidic residues. Residues 71-139 (TSPQRAGALA…PSNYVAPSDS (69 aa)) form the SH3 domain. The SH2 domain maps to 145-242 (WYFGKITRRE…GLCHRLTNVC (98 aa)). One can recognise a Protein kinase domain in the interval 264–514 (LRLEVKLGQG…TFEYLQAQLL (251 aa)). ATP is bound by residues 270–278 (LGQGYFGEV) and lysine 292. Residue aspartate 383 is the Proton acceptor of the active site. A Phosphotyrosine; by autocatalysis modification is found at tyrosine 413.

This sequence belongs to the protein kinase superfamily. Tyr protein kinase family. SRC subfamily. Homodimer. The phosphorylated form is termed pp60v-src.

It carries out the reaction L-tyrosyl-[protein] + ATP = O-phospho-L-tyrosyl-[protein] + ADP + H(+). In terms of biological role, this phosphoprotein, required for both the initiation and the maintenance of neoplastic transformation, is a protein kinase that catalyzes the phosphorylation of tyrosine residues in vitro. The sequence is that of Tyrosine-protein kinase transforming protein Src (V-SRC) from Gallus gallus (Chicken).